A 409-amino-acid polypeptide reads, in one-letter code: Divalent metal cation transporter MntH (409 aa).

The next 11 helical transmembrane spans lie at 19 to 39 (LSLMGPAFIAAIAYIDPGNFA), 46 to 66 (ATFGYTLLWVVVWANVMAMLV), 98 to 118 (WVQAEIIVMATDLAEFIGAAI), 122 to 142 (LLFGVTLLQGAVLTGIATFLI), 155 to 175 (LVIGGLLLFVAAAYIVELIFS), 196 to 216 (AVFLAAGVLGATIMPHVIYLH), 241 to 261 (IAMTIAGFVNLAMMATAAAAF), 290 to 310 (VFGLSLIAAGLSSTVVGTLAG), 320 to 340 (FYIPMWVRRIVTMLPSFIVIL), 348 to 368 (ILVMSQVLLSFGIALALVPLL), and 388 to 408 (ILGKLVVLIVVGLNAYLLISL).

The protein belongs to the NRAMP family.

The protein localises to the cell inner membrane. In terms of biological role, h(+)-stimulated, divalent metal cation uptake system. This Yersinia pseudotuberculosis serotype O:1b (strain IP 31758) protein is Divalent metal cation transporter MntH.